We begin with the raw amino-acid sequence, 169 residues long: Endoribonuclease YbeY (169 aa).

Residues His-135, His-139, and His-145 each coordinate Zn(2+).

It belongs to the endoribonuclease YbeY family. The cofactor is Zn(2+).

It is found in the cytoplasm. Its function is as follows. Single strand-specific metallo-endoribonuclease involved in late-stage 70S ribosome quality control and in maturation of the 3' terminus of the 16S rRNA. The sequence is that of Endoribonuclease YbeY from Lachnospira eligens (strain ATCC 27750 / DSM 3376 / VPI C15-48 / C15-B4) (Eubacterium eligens).